The following is a 212-amino-acid chain: Probable U3 small nucleolar RNA-associated protein 11 (212 aa).

This sequence belongs to the UTP11 family. In terms of assembly, component of the ribosomal small subunit (SSU) processome.

The protein resides in the nucleus. The protein localises to the nucleolus. Involved in nucleolar processing of pre-18S ribosomal RNA. This is Probable U3 small nucleolar RNA-associated protein 11 from Plasmodium falciparum (isolate 3D7).